The sequence spans 283 residues: Shikimate dehydrogenase (NADP(+)) (283 aa).

Shikimate-binding positions include 16–18 (SLS) and threonine 63. Lysine 67 (proton acceptor) is an active-site residue. NADP(+) is bound at residue aspartate 79. 2 residues coordinate shikimate: asparagine 88 and aspartate 103. Residues 128-132 (GAGGA) and glycine 243 contribute to the NADP(+) site.

It belongs to the shikimate dehydrogenase family. As to quaternary structure, homodimer.

The catalysed reaction is shikimate + NADP(+) = 3-dehydroshikimate + NADPH + H(+). It functions in the pathway metabolic intermediate biosynthesis; chorismate biosynthesis; chorismate from D-erythrose 4-phosphate and phosphoenolpyruvate: step 4/7. Functionally, involved in the biosynthesis of the chorismate, which leads to the biosynthesis of aromatic amino acids. Catalyzes the reversible NADPH linked reduction of 3-dehydroshikimate (DHSA) to yield shikimate (SA). In Xanthomonas euvesicatoria pv. vesicatoria (strain 85-10) (Xanthomonas campestris pv. vesicatoria), this protein is Shikimate dehydrogenase (NADP(+)).